Here is a 1407-residue protein sequence, read N- to C-terminus: DNA-directed RNA polymerase subunit beta' (1407 aa).

4 residues coordinate Zn(2+): Cys-70, Cys-72, Cys-85, and Cys-88. Residues Asp-460, Asp-462, and Asp-464 each contribute to the Mg(2+) site. 4 residues coordinate Zn(2+): Cys-814, Cys-888, Cys-895, and Cys-898. Lys-972 is subject to N6-acetyllysine.

The protein belongs to the RNA polymerase beta' chain family. As to quaternary structure, the RNAP catalytic core consists of 2 alpha, 1 beta, 1 beta' and 1 omega subunit. When a sigma factor is associated with the core the holoenzyme is formed, which can initiate transcription. Mg(2+) serves as cofactor. The cofactor is Zn(2+).

It carries out the reaction RNA(n) + a ribonucleoside 5'-triphosphate = RNA(n+1) + diphosphate. Its function is as follows. DNA-dependent RNA polymerase catalyzes the transcription of DNA into RNA using the four ribonucleoside triphosphates as substrates. The polypeptide is DNA-directed RNA polymerase subunit beta' (Escherichia coli O6:H1 (strain CFT073 / ATCC 700928 / UPEC)).